The primary structure comprises 141 residues: Large ribosomal subunit protein uL16 (141 aa).

Positions 1-23 (MLMPKRTKYRKQMKGRNRGKAHR) are disordered.

The protein belongs to the universal ribosomal protein uL16 family. As to quaternary structure, part of the 50S ribosomal subunit.

Binds 23S rRNA and is also seen to make contacts with the A and possibly P site tRNAs. The sequence is that of Large ribosomal subunit protein uL16 from Helicobacter pylori (strain J99 / ATCC 700824) (Campylobacter pylori J99).